Reading from the N-terminus, the 181-residue chain is Shikimate kinase (181 aa).

11-16 is an ATP binding site; it reads GAGKSK. Residue Ser-15 coordinates Mg(2+). Substrate-binding residues include Asp-33, Arg-58, and Gly-80. ATP is bound at residue Arg-128. Arg-144 lines the substrate pocket.

Belongs to the shikimate kinase family. In terms of assembly, monomer. Mg(2+) is required as a cofactor.

Its subcellular location is the cytoplasm. The enzyme catalyses shikimate + ATP = 3-phosphoshikimate + ADP + H(+). Its pathway is metabolic intermediate biosynthesis; chorismate biosynthesis; chorismate from D-erythrose 4-phosphate and phosphoenolpyruvate: step 5/7. Catalyzes the specific phosphorylation of the 3-hydroxyl group of shikimic acid using ATP as a cosubstrate. The polypeptide is Shikimate kinase (Leptospira biflexa serovar Patoc (strain Patoc 1 / Ames)).